The chain runs to 461 residues: Ribulose bisphosphate carboxylase (461 aa).

Asparagine 112 contributes to the substrate binding site. The active-site Proton acceptor is the lysine 167. Position 169 (lysine 169) interacts with substrate. 3 residues coordinate Mg(2+): lysine 192, aspartate 194, and glutamate 195. Lysine 192 is modified (N6-carboxylysine). Residue histidine 288 is the Proton acceptor of the active site. 3 residues coordinate substrate: arginine 289, histidine 322, and serine 369.

This sequence belongs to the RuBisCO large chain family. Type II subfamily. In terms of assembly, homodimer. The cofactor is Mg(2+).

The enzyme catalyses 2 (2R)-3-phosphoglycerate + 2 H(+) = D-ribulose 1,5-bisphosphate + CO2 + H2O. It catalyses the reaction D-ribulose 1,5-bisphosphate + O2 = 2-phosphoglycolate + (2R)-3-phosphoglycerate + 2 H(+). In terms of biological role, ruBisCO catalyzes two reactions: the carboxylation of D-ribulose 1,5-bisphosphate, the primary event in carbon dioxide fixation, as well as the oxidative fragmentation of the pentose substrate. Both reactions occur simultaneously and in competition at the same active site. This Rhodopseudomonas palustris (strain ATCC BAA-98 / CGA009) protein is Ribulose bisphosphate carboxylase.